The sequence spans 541 residues: Cilia- and flagella-associated protein 97 (541 aa).

2 positions are modified to phosphoserine: serine 8 and serine 19. 5 disordered regions span residues glutamate 28–lysine 47, glutamate 93–asparagine 296, arginine 313–alanine 337, leucine 406–leucine 430, and histidine 495–cysteine 514. Composition is skewed to basic and acidic residues over residues lysine 35–lysine 47, glutamate 93–asparagine 107, and arginine 142–aspartate 151. A compositionally biased stretch (acidic residues) spans aspartate 152–serine 161. At threonine 155 the chain carries Phosphothreonine. A phosphoserine mark is found at serine 160 and serine 161. Over residues serine 176 to serine 201 the composition is skewed to low complexity. A compositionally biased stretch (basic and acidic residues) spans glycine 207–serine 218. 2 stretches are compositionally biased toward polar residues: residues serine 219–lysine 232 and lysine 240–glutamine 250. At serine 230 the chain carries Phosphoserine. Serine 258 is modified (phosphoserine). The segment covering proline 267–glutamine 277 has biased composition (polar residues). Positions glutamine 287 to asparagine 296 are enriched in basic and acidic residues. The stretch at arginine 382–lysine 459 forms a coiled coil. Over residues serine 503 to serine 513 the composition is skewed to polar residues.

The protein belongs to the CFAP97 family. As to expression, highly expressed in testis with lower levels detected in other tissues including lung, heart and kidney.

In Mus musculus (Mouse), this protein is Cilia- and flagella-associated protein 97.